Reading from the N-terminus, the 152-residue chain is Protein-export protein SecB (152 aa).

It belongs to the SecB family. Homotetramer, a dimer of dimers. One homotetramer interacts with 1 SecA dimer.

The protein localises to the cytoplasm. Its function is as follows. One of the proteins required for the normal export of preproteins out of the cell cytoplasm. It is a molecular chaperone that binds to a subset of precursor proteins, maintaining them in a translocation-competent state. It also specifically binds to its receptor SecA. The protein is Protein-export protein SecB of Rickettsia massiliae (strain Mtu5).